Here is a 324-residue protein sequence, read N- to C-terminus: Cyclic GMP-AMP synthase CdnE03 (324 aa).

Mg(2+) contacts are provided by aspartate 87 and aspartate 89. ATP is bound by residues aspartate 89, 144 to 145 (NK), and aspartate 159. Aspartate 159 lines the Mg(2+) pocket. GTP is bound by residues lysine 224 and serine 243.

This sequence belongs to the CD-NTase family. E03 subfamily. Mg(2+) is required as a cofactor.

The catalysed reaction is GTP + ATP = 3',2'-cGAMP + 2 diphosphate. Activated by a virus-derived, approximately 400 nucleotide RNA (called CBASS-activating bacteriophage RNA, cabRNA) that begins in the viral terminase subunit terS and extends into terL. RNA secondary and/or tertiary structure, as well as viral infection itself, are important for CdnE activation. A much longer RNA (escaper RNA) with a different secondary structure, derived from a terS-mutated virus still binds to this protein, but does not activate its nucleotide cyclase activity. Shorter viral-derived RNAs (34 and 49 nt) with extensive predicted secondary structure also activate the enzyme, although not as well as full-length cabRNA. Cyclic nucleotide synthase (second messenger synthase) of a CBASS antivirus system. CBASS (cyclic oligonucleotide-based antiphage signaling system) provides immunity against bacteriophage. The CD-NTase protein synthesizes cyclic nucleotides in response to infection; these serve as specific second messenger signals. The signals activate a diverse range of effectors, leading to bacterial cell death and thus abortive phage infection. The effector for this system is downstream Cap15. A type I-B CBASS system. In terms of biological role, cyclic dinucleotide synthase that catalyzes the synthesis of 3',2'-cyclic GMP-AMP (cGAMP) from GTP and ATP upon activation by viral-derived cabRNA. Binds cabRNA via positive charges in its N-terminus. Its function is as follows. Protects S.aureus against phage infection. When the CBASS operon (cdnE-cap15) is introduced in S.aureus strain RN4220 there is strong protection against lytic DNA phages 80alpha-vir and phi-NM1-gamma-6 but little to no protection against phages phi-NM4-gamma-4 or phi-12-gamma-3. The polypeptide is Cyclic GMP-AMP synthase CdnE03 (Staphylococcus schleiferi).